Consider the following 226-residue polypeptide: UPF0502 protein azo0627 (226 aa).

This sequence belongs to the UPF0502 family.

The polypeptide is UPF0502 protein azo0627 (Azoarcus sp. (strain BH72)).